A 310-amino-acid chain; its full sequence is Ribosomal RNA small subunit methyltransferase H (310 aa).

S-adenosyl-L-methionine is bound by residues 32 to 34, Asp52, Phe79, Asp100, and Gln107; that span reads GGH.

This sequence belongs to the methyltransferase superfamily. RsmH family.

It is found in the cytoplasm. The catalysed reaction is cytidine(1402) in 16S rRNA + S-adenosyl-L-methionine = N(4)-methylcytidine(1402) in 16S rRNA + S-adenosyl-L-homocysteine + H(+). Its function is as follows. Specifically methylates the N4 position of cytidine in position 1402 (C1402) of 16S rRNA. The sequence is that of Ribosomal RNA small subunit methyltransferase H from Bacillus mycoides (strain KBAB4) (Bacillus weihenstephanensis).